Here is a 169-residue protein sequence, read N- to C-terminus: NADH-quinone oxidoreductase subunit B (169 aa).

Residues Cys42, Cys43, Cys107, and Cys136 each contribute to the [4Fe-4S] cluster site.

This sequence belongs to the complex I 20 kDa subunit family. NDH-1 is composed of 14 different subunits. Subunits NuoB, C, D, E, F, and G constitute the peripheral sector of the complex. Requires [4Fe-4S] cluster as cofactor.

It localises to the cell inner membrane. The enzyme catalyses a quinone + NADH + 5 H(+)(in) = a quinol + NAD(+) + 4 H(+)(out). In terms of biological role, NDH-1 shuttles electrons from NADH, via FMN and iron-sulfur (Fe-S) centers, to quinones in the respiratory chain. The immediate electron acceptor for the enzyme in this species is believed to be ubiquinone. Couples the redox reaction to proton translocation (for every two electrons transferred, four hydrogen ions are translocated across the cytoplasmic membrane), and thus conserves the redox energy in a proton gradient. This is NADH-quinone oxidoreductase subunit B from Helicobacter hepaticus (strain ATCC 51449 / 3B1).